The following is a 166-amino-acid chain: Early E3 18.5 kDa glycoprotein (166 aa).

An N-terminal signal peptide occupies residues 1-19; sequence MGPILVLLVLLSLLEAGSA. Topologically, residues 20–131 are lumenal; that stretch reads NYDPCLDFDP…SKDNIVTFSI (112 aa). N31 is a glycosylation site (N-linked (GlcNAc...) asparagine; by host). Disulfide bonds link C32–C50 and C44–C106. N-linked (GlcNAc...) asparagine; by host glycosylation is found at N63, N67, and N97. Residues 132-152 form a helical membrane-spanning segment; it reads AYCLCACLLTALLCVCIHLLV. At 153–166 the chain is on the cytoplasmic side; it reads TTRIKNANNKEKMP. The short motif at 162-166 is the Di-lysine motif element; sequence KEKMP.

This sequence belongs to the adenoviridae E19 family. Post-translationally, both disulfide bonds are absolutely critical for the interaction with MHC antigens. N-glycosylated; high-mannose.

Its subcellular location is the host endoplasmic reticulum membrane. In terms of biological role, binds and retains class I heavy chains in the endoplasmic reticulum during the early period of virus infection, thereby impairing their transport to the cell surface. Also delays the expression of class I alleles that it cannot affect by direct retention. Binds transporters associated with antigen processing (TAP) and acts as a tapasin inhibitor, preventing class I/TAP association. In consequence, infected cells are masked for immune recognition by cytotoxic T-lymphocytes. The protein is Early E3 18.5 kDa glycoprotein of Human adenovirus B serotype 11 (strain BC34) (HAdV-11).